The sequence spans 97 residues: Co-chaperonin GroES (97 aa).

Belongs to the GroES chaperonin family. As to quaternary structure, heptamer of 7 subunits arranged in a ring. Interacts with the chaperonin GroEL.

The protein localises to the cytoplasm. Functionally, together with the chaperonin GroEL, plays an essential role in assisting protein folding. The GroEL-GroES system forms a nano-cage that allows encapsulation of the non-native substrate proteins and provides a physical environment optimized to promote and accelerate protein folding. GroES binds to the apical surface of the GroEL ring, thereby capping the opening of the GroEL channel. This chain is Co-chaperonin GroES, found in Buchnera aphidicola subsp. Tuberolachnus salignus.